The primary structure comprises 137 residues: Holo-[acyl-carrier-protein] synthase (137 aa).

Mg(2+) is bound by residues Asp-8 and Glu-57.

It belongs to the P-Pant transferase superfamily. AcpS family. It depends on Mg(2+) as a cofactor.

The protein localises to the cytoplasm. The enzyme catalyses apo-[ACP] + CoA = holo-[ACP] + adenosine 3',5'-bisphosphate + H(+). Functionally, transfers the 4'-phosphopantetheine moiety from coenzyme A to a Ser of acyl-carrier-protein. This Cereibacter sphaeroides (strain ATCC 17023 / DSM 158 / JCM 6121 / CCUG 31486 / LMG 2827 / NBRC 12203 / NCIMB 8253 / ATH 2.4.1.) (Rhodobacter sphaeroides) protein is Holo-[acyl-carrier-protein] synthase.